A 72-amino-acid chain; its full sequence is ATP synthase subunit c (72 aa).

Helical transmembrane passes span leucine 5–alanine 25 and alanine 51–valine 71.

Belongs to the ATPase C chain family. As to quaternary structure, F-type ATPases have 2 components, F(1) - the catalytic core - and F(0) - the membrane proton channel. F(1) has five subunits: alpha(3), beta(3), gamma(1), delta(1), epsilon(1). F(0) has three main subunits: a(1), b(2) and c(10-14). The alpha and beta chains form an alternating ring which encloses part of the gamma chain. F(1) is attached to F(0) by a central stalk formed by the gamma and epsilon chains, while a peripheral stalk is formed by the delta and b chains.

Its subcellular location is the cell membrane. Functionally, f(1)F(0) ATP synthase produces ATP from ADP in the presence of a proton or sodium gradient. F-type ATPases consist of two structural domains, F(1) containing the extramembraneous catalytic core and F(0) containing the membrane proton channel, linked together by a central stalk and a peripheral stalk. During catalysis, ATP synthesis in the catalytic domain of F(1) is coupled via a rotary mechanism of the central stalk subunits to proton translocation. In terms of biological role, key component of the F(0) channel; it plays a direct role in translocation across the membrane. A homomeric c-ring of between 10-14 subunits forms the central stalk rotor element with the F(1) delta and epsilon subunits. In Clostridium perfringens (strain ATCC 13124 / DSM 756 / JCM 1290 / NCIMB 6125 / NCTC 8237 / Type A), this protein is ATP synthase subunit c.